A 129-amino-acid chain; its full sequence is UPF0325 protein Ent638_0703 (129 aa).

The protein belongs to the UPF0325 family.

This Enterobacter sp. (strain 638) protein is UPF0325 protein Ent638_0703.